Consider the following 357-residue polypeptide: Glucose 1-dehydrogenase (357 aa).

Residue Asp38 coordinates Zn(2+). The substrate site is built by Thr40 and His49. Zn(2+)-binding residues include His63 and Glu64. Glu114 and Glu150 together coordinate substrate. Glu150 contacts Zn(2+). NADP(+)-binding positions include 181-184, 207-208, Ser228, 272-274, and 301-303; these read NGSL, RR, LGV, and SVN. Asn303 contributes to the substrate binding site.

This sequence belongs to the zinc-containing alcohol dehydrogenase family. Glucose 1-dehydrogenase subfamily. As to quaternary structure, homodimer. The cofactor is Zn(2+).

It carries out the reaction D-glucose + NAD(+) = D-glucono-1,5-lactone + NADH + H(+). The enzyme catalyses D-glucose + NADP(+) = D-glucono-1,5-lactone + NADPH + H(+). Activated by molar concentrations of KCl or NaCl. Inhibited by EDTA in vitro. In terms of biological role, catalyzes the NAD(P)(+)-dependent oxidation of D-glucose to D-gluconate. Displays broad substrate specificity since it is able to catalyze the oxidation of a number of alternative aldose sugars, such as D-xylose, D-galactose, and D-fucose, to the corresponding glyconate. Can utilize both NAD(+) and NADP(+) as electron acceptor, with a preference for NADP(+). Physiologically, seems to be involved in the degradation of glucose through a modified Entner-Doudoroff pathway. This chain is Glucose 1-dehydrogenase, found in Haloferax mediterranei (strain ATCC 33500 / DSM 1411 / JCM 8866 / NBRC 14739 / NCIMB 2177 / R-4) (Halobacterium mediterranei).